The primary structure comprises 96 residues: Auxin-responsive protein SAUR29 (96 aa).

Belongs to the ARG7 family.

It is found in the cell membrane. In terms of biological role, functions as a positive effector of cell expansion through modulation of auxin transport. Involved in thermo-responsiveness of plant architecture. Enhances plasma membrane H(+)-ATPase. The protein is Auxin-responsive protein SAUR29 of Arabidopsis thaliana (Mouse-ear cress).